A 384-amino-acid chain; its full sequence is Putative RNA methyltransferase slr0064 (384 aa).

Residues 53-164 (LLYRINLWSR…QNHCQLSLDS (112 aa)) form the THUMP domain.

This sequence belongs to the methyltransferase superfamily.

The chain is Putative RNA methyltransferase slr0064 from Synechocystis sp. (strain ATCC 27184 / PCC 6803 / Kazusa).